The primary structure comprises 260 residues: Manganese transport system ATP-binding protein MntA (260 aa).

Positions 10-245 (ISVDGVSVTY…NLELTFGGLP (236 aa)) constitute an ABC transporter domain. 43–50 (GPNGSGKS) contacts ATP.

It belongs to the ABC transporter superfamily.

Functionally, part of an ATP-driven transport system for manganese. The protein is Manganese transport system ATP-binding protein MntA (mntA) of Synechocystis sp. (strain ATCC 27184 / PCC 6803 / Kazusa).